Reading from the N-terminus, the 428-residue chain is Dihydroorotase (428 aa).

Zn(2+)-binding residues include His-59 and His-61. Substrate is bound by residues 61–63 and Asn-93; that span reads HLR. Residues Asp-151, His-178, and His-231 each contribute to the Zn(2+) site. Asn-277 lines the substrate pocket. Residue Asp-304 participates in Zn(2+) binding. Residue Asp-304 is part of the active site. Substrate-binding positions include His-308 and 322-323; that span reads FG.

Belongs to the metallo-dependent hydrolases superfamily. DHOase family. Class I DHOase subfamily. The cofactor is Zn(2+).

It catalyses the reaction (S)-dihydroorotate + H2O = N-carbamoyl-L-aspartate + H(+). Its pathway is pyrimidine metabolism; UMP biosynthesis via de novo pathway; (S)-dihydroorotate from bicarbonate: step 3/3. In terms of biological role, catalyzes the reversible cyclization of carbamoyl aspartate to dihydroorotate. This chain is Dihydroorotase, found in Bacillus cereus (strain ATCC 10987 / NRS 248).